The following is a 295-amino-acid chain: Elongation factor Ts (295 aa).

Residues 79 to 82 are involved in Mg(2+) ion dislocation from EF-Tu; sequence TDFV.

It belongs to the EF-Ts family.

The protein localises to the cytoplasm. In terms of biological role, associates with the EF-Tu.GDP complex and induces the exchange of GDP to GTP. It remains bound to the aminoacyl-tRNA.EF-Tu.GTP complex up to the GTP hydrolysis stage on the ribosome. In Bacillus anthracis (strain A0248), this protein is Elongation factor Ts.